The primary structure comprises 379 residues: Homoserine O-succinyltransferase (379 aa).

The AB hydrolase-1 domain occupies 51–360 (NAVLICHALS…DAPQGHDAFL (310 aa)). Ser157 acts as the Nucleophile in catalysis. Substrate is bound at residue Arg227. Catalysis depends on residues Asp323 and His356. Asp357 is a substrate binding site.

It belongs to the AB hydrolase superfamily. MetX family. Homodimer.

It localises to the cytoplasm. It catalyses the reaction L-homoserine + succinyl-CoA = O-succinyl-L-homoserine + CoA. It functions in the pathway amino-acid biosynthesis; L-methionine biosynthesis via de novo pathway; O-succinyl-L-homoserine from L-homoserine: step 1/1. In terms of biological role, transfers a succinyl group from succinyl-CoA to L-homoserine, forming succinyl-L-homoserine. This chain is Homoserine O-succinyltransferase, found in Pseudomonas syringae pv. tomato (strain ATCC BAA-871 / DC3000).